Consider the following 261-residue polypeptide: uncharacterized protein (261 aa).

It belongs to the FrhB family.

This is an uncharacterized protein from Methanocaldococcus jannaschii (strain ATCC 43067 / DSM 2661 / JAL-1 / JCM 10045 / NBRC 100440) (Methanococcus jannaschii).